Consider the following 316-residue polypeptide: Biotin synthase (316 aa).

The Radical SAM core domain occupies 36–264; sequence TEIQISTLLS…ASRVRLAAGR (229 aa). [4Fe-4S] cluster is bound by residues Cys51, Cys55, and Cys58. Residues Cys96, Cys127, Cys187, and Arg259 each contribute to the [2Fe-2S] cluster site.

Belongs to the radical SAM superfamily. Biotin synthase family. Homodimer. The cofactor is [4Fe-4S] cluster. [2Fe-2S] cluster is required as a cofactor.

The enzyme catalyses (4R,5S)-dethiobiotin + (sulfur carrier)-SH + 2 reduced [2Fe-2S]-[ferredoxin] + 2 S-adenosyl-L-methionine = (sulfur carrier)-H + biotin + 2 5'-deoxyadenosine + 2 L-methionine + 2 oxidized [2Fe-2S]-[ferredoxin]. It functions in the pathway cofactor biosynthesis; biotin biosynthesis; biotin from 7,8-diaminononanoate: step 2/2. Functionally, catalyzes the conversion of dethiobiotin (DTB) to biotin by the insertion of a sulfur atom into dethiobiotin via a radical-based mechanism. This Gluconacetobacter diazotrophicus (strain ATCC 49037 / DSM 5601 / CCUG 37298 / CIP 103539 / LMG 7603 / PAl5) protein is Biotin synthase.